A 623-amino-acid polypeptide reads, in one-letter code: Prothrombin (623 aa).

Positions 1 to 24 (MAHVGGLWLHGCLALAVLVSLVHS) are cleaved as a signal peptide. The propeptide occupies 25 to 43 (QHVFMAPQQALSLLQRARR). Positions 44–90 (ANSGFFEEMRKGNLERECVEEQCSREEAYEALESPSETDAFWAKYTA) constitute a Gla domain. Glu-50, Glu-51, Glu-58, Glu-60, Glu-63, Glu-64, Glu-69, Glu-70, Glu-73, and Glu-76 each carry 4-carboxyglutamate. Cys-61 and Cys-66 are disulfide-bonded. Intrachain disulfides connect Cys-91–Cys-104, Cys-109–Cys-187, Cys-130–Cys-170, Cys-158–Cys-182, Cys-214–Cys-292, Cys-235–Cys-275, Cys-263–Cys-287, Cys-337–Cys-483, Cys-392–Cys-408, Cys-537–Cys-551, and Cys-565–Cys-595. Kringle domains lie at 108 to 187 (NCAE…IPVC) and 213 to 292 (TCVP…LDYC). Residues Asn-120 and Asn-144 are each glycosylated (N-linked (GlcNAc...) asparagine). A Peptidase S1 domain is found at 365-619 (IVEGSDAEIG…LKKWMQKVID (255 aa)). His-407 functions as the Charge relay system in the catalytic mechanism. An N-linked (GlcNAc...) asparagine glycan is attached at Asn-417. Asp-463 acts as the Charge relay system in catalysis. Residues 552–574 (AGYKPDEGKRGDACEGDSGGPFV) form a high affinity receptor-binding region which is also known as the TP508 peptide region. Ser-569 serves as the catalytic Charge relay system.

The protein belongs to the peptidase S1 family. As to quaternary structure, heterodimer (named alpha-thrombin) of a light and a heavy chain; disulfide-linked. Forms a heterodimer with SERPINA5. In plasma, interacts (via N-terminus) with alpha-1-microglobulin; this interaction does not prevent the activation of prothrombin to thrombin. Post-translationally, the gamma-carboxyglutamyl residues, which bind calcium ions, result from the carboxylation of glutamyl residues by a microsomal enzyme, the vitamin K-dependent carboxylase. The modified residues are necessary for the calcium-dependent interaction with a negatively charged phospholipid surface, which is essential for the conversion of prothrombin to thrombin. In the penultimate step of the coagulation cascade, prothrombin is converted to thrombin by the prothrombinase complex composed of factor Xa (F10), cofactor Va (F5), and phospholipids. This activation requires factor Xa-catalyzed sequential cleavage at 2 sites, Arg-315 and Arg-364, along 2 possible pathways. In the first pathway, the first cleavage occurs at Arg-315, leading to the formation of the inactive intermediate prethrombin-2. This pathway preferentially occurs on platelets and in the absence of cofactor Va. In the second pathway, the first cleavage occurs at Arg-364, which separates protease domain into 2 chains that remain connected through a disulfide bond and generates the active intermediate meizothrombin. The presence of cofactor Va directs activation along the meizothrombin pathway and greatly accelerates the rate of cleavage at Arg-364, but has a smaller effect on the cleavage of meizothrombin at Arg-315. Meizothrombin accumulates as an intermediate when prothrombinase is assembled on the membrane of red blood cells.

It catalyses the reaction Selective cleavage of Arg-|-Gly bonds in fibrinogen to form fibrin and release fibrinopeptides A and B.. Its activity is regulated as follows. Activity is promoted in the presence of negatively charged surfaces, such as polyphosphate and dextran sulfate. Inhibited by SERPINA5. Thrombin, which cleaves bonds after Arg and Lys, converts fibrinogen to fibrin and activates factors V, VII, VIII, XIII, and, in complex with thrombomodulin, protein C. Functions in blood homeostasis, inflammation and wound healing. Activates coagulation factor XI (F11); activation is promoted by the contact with negatively charged surfaces. Triggers the production of pro-inflammatory cytokines, such as MCP-1/CCL2 and IL8/CXCL8, in endothelial cells. The polypeptide is Prothrombin (F2) (Sus scrofa (Pig)).